The following is a 224-amino-acid chain: uncharacterized protein (224 aa).

The ABC transporter domain maps to 2-221 (IEAKNVWKIY…KLRDGEIVEI (220 aa)). Position 38–45 (38–45 (GPSGCGKS)) interacts with ATP.

It belongs to the ABC transporter superfamily.

This is an uncharacterized protein from Methanocaldococcus jannaschii (strain ATCC 43067 / DSM 2661 / JAL-1 / JCM 10045 / NBRC 100440) (Methanococcus jannaschii).